The sequence spans 345 residues: UDP-3-O-acylglucosamine N-acyltransferase (345 aa).

H253 functions as the Proton acceptor in the catalytic mechanism.

This sequence belongs to the transferase hexapeptide repeat family. LpxD subfamily. As to quaternary structure, homotrimer.

The enzyme catalyses a UDP-3-O-[(3R)-3-hydroxyacyl]-alpha-D-glucosamine + a (3R)-hydroxyacyl-[ACP] = a UDP-2-N,3-O-bis[(3R)-3-hydroxyacyl]-alpha-D-glucosamine + holo-[ACP] + H(+). It participates in bacterial outer membrane biogenesis; LPS lipid A biosynthesis. Functionally, catalyzes the N-acylation of UDP-3-O-acylglucosamine using 3-hydroxyacyl-ACP as the acyl donor. Is involved in the biosynthesis of lipid A, a phosphorylated glycolipid that anchors the lipopolysaccharide to the outer membrane of the cell. This is UDP-3-O-acylglucosamine N-acyltransferase from Rickettsia massiliae (strain Mtu5).